The following is a 961-amino-acid chain: Ubiquitin carboxyl-terminal hydrolase 4 (961 aa).

A DUSP domain is found at 11 to 122; sequence PDVETQKTEL…GQQPIVRKVV (112 aa). Residues 27–216 form a necessary for interaction with SART3 region; it reads TLQRGAQWYL…LYQGQVLVIE (190 aa). The short motif at 133-141 is the Nuclear export signal element; it reads VEVYLLELK. Residues 142 to 226 enclose the Ubiquitin-like 1 domain; sequence LCENSDPTNV…PQNEDGTWPR (85 aa). The segment at 219–257 is disordered; that stretch reads NEDGTWPRQTLQSKSSTAPSRNFTTSSKPSASPYSSMSA. The segment covering 225–243 has biased composition (polar residues); sequence PRQTLQSKSSTAPSRNFTT. The tract at residues 229–295 is required for USP4 activation by providing conformational flexibility between the DUSP and catalytic domains; sequence LQSKSSTAPS…SYNCQEPPSP (67 aa). A compositionally biased stretch (low complexity) spans 244-257; it reads SSKPSASPYSSMSA. Positions 302–921 constitute a USP domain; that stretch reads CGLGNLGNTC…AAYVLFYQRR (620 aa). Cysteine 311 is an active-site residue. The interval 384–386 is regulates ubiquitin dissociation; sequence PQF. The tract at residues 405-407 is necessary for interaction with RBL2; sequence LHE. Residue serine 445 is modified to Phosphoserine. The interval 459–463 is necessary for interaction with RB1 and RBL2; the sequence is LVCPE. Residues cysteine 461 and cysteine 464 each coordinate Zn(2+). Residues 483–571 enclose the Ubiquitin-like 2 domain; the sequence is LKKDRIMEVF…IFVYEICTTP (89 aa). An interacts with DUSP and ubiquitin-like 1 domains and is required for USP4 activation region spans residues 485-773; that stretch reads KDRIMEVFLV…SQPQKKKKAA (289 aa). Residues 641-700 are disordered; sequence SSPLEPGACNGSRGSYEGDEEEMDHQEEGKEQLSEVEESGEDSQGGDPTETTQKAKGPPR. Residues serine 655, serine 674, and serine 679 each carry the phosphoserine modification. Positions 765-770 match the Nuclear localization signal motif; sequence QPQKKK. Residues cysteine 797 and cysteine 800 each coordinate Zn(2+). Histidine 879 is an active-site residue. Positions 924-961 are disordered; that stretch reads ECPSTSSPVSFPGSDGGAKLSSSQQDLGEEEAYTMDTN. Residues 950–961 show a composition bias toward acidic residues; it reads LGEEEAYTMDTN.

It belongs to the peptidase C19 family. USP4 subfamily. Interacts with RB1 (both dephosphorylated and hypophosphorylated forms). Interacts with RBL1 and RBL2. Interacts with ADORA2A (via cytoplasmic C-terminus); the interaction is direct. Interacts with SART3; recruits USP4 to its substrate PRPF3. Post-translationally, phosphorylated at Ser-445 by PKB/AKT1 in response to EGF stimulus, promoting its ability deubiquitinate RHEB. Monoubiquitinated by TRIM21. Ubiquitination does not lead to its proteasomal degradation. Autodeubiquitinated. As to expression, expressed in hippocampus and striatum (at protein level).

Its subcellular location is the cytoplasm. It localises to the nucleus. The catalysed reaction is Thiol-dependent hydrolysis of ester, thioester, amide, peptide and isopeptide bonds formed by the C-terminal Gly of ubiquitin (a 76-residue protein attached to proteins as an intracellular targeting signal).. The completion of the deubiquitinase reaction is mediated by the DUSP and ubiquitin-like 1 domains which promotes the release of ubiquitin from the catalytic site enabling subsequent reactions to occur. In terms of biological role, deubiquitinating enzyme that removes conjugated ubiquitin from target proteins. Deubiquitinates PDPK1. Deubiquitinates TRIM21. Deubiquitinates receptor ADORA2A which increases the amount of functional receptor at the cell surface. Deubiquitinates HAS2. Deubiquitinates RHEB in response to EGF signaling, promoting mTORC1 signaling. May regulate mRNA splicing through deubiquitination of the U4 spliceosomal protein PRPF3. This may prevent its recognition by the U5 component PRPF8 thereby destabilizing interactions within the U4/U6.U5 snRNP. May also play a role in the regulation of quality control in the ER. The sequence is that of Ubiquitin carboxyl-terminal hydrolase 4 (Usp4) from Rattus norvegicus (Rat).